Reading from the N-terminus, the 295-residue chain is tRNA dimethylallyltransferase (295 aa).

An ATP-binding site is contributed by 11 to 18; sequence GPTVSGKS. Position 13–18 (13–18) interacts with substrate; sequence TVSGKS. Interaction with substrate tRNA stretches follow at residues 36-39 and 158-162; these read DSMQ and QRIIR.

It belongs to the IPP transferase family. As to quaternary structure, monomer. Mg(2+) serves as cofactor.

It carries out the reaction adenosine(37) in tRNA + dimethylallyl diphosphate = N(6)-dimethylallyladenosine(37) in tRNA + diphosphate. Functionally, catalyzes the transfer of a dimethylallyl group onto the adenine at position 37 in tRNAs that read codons beginning with uridine, leading to the formation of N6-(dimethylallyl)adenosine (i(6)A). This is tRNA dimethylallyltransferase from Bartonella quintana (strain Toulouse) (Rochalimaea quintana).